Reading from the N-terminus, the 112-residue chain is uncharacterized protein (112 aa).

Residues 5-112 (IFQKIIKGII…LLGGKKLNKI (108 aa)) enclose the HIT domain. Positions 98–102 (HLHLH) match the Histidine triad motif motif.

This is an uncharacterized protein from Buchnera aphidicola subsp. Baizongia pistaciae (strain Bp).